A 432-amino-acid chain; its full sequence is Glutamate-1-semialdehyde 2,1-aminomutase (432 aa).

Lysine 269 carries the N6-(pyridoxal phosphate)lysine modification.

The protein belongs to the class-III pyridoxal-phosphate-dependent aminotransferase family. HemL subfamily. As to quaternary structure, homodimer. It depends on pyridoxal 5'-phosphate as a cofactor.

It is found in the cytoplasm. The catalysed reaction is (S)-4-amino-5-oxopentanoate = 5-aminolevulinate. It functions in the pathway porphyrin-containing compound metabolism; protoporphyrin-IX biosynthesis; 5-aminolevulinate from L-glutamyl-tRNA(Glu): step 2/2. Its pathway is porphyrin-containing compound metabolism; chlorophyll biosynthesis. This is Glutamate-1-semialdehyde 2,1-aminomutase from Chloroherpeton thalassium (strain ATCC 35110 / GB-78).